Consider the following 627-residue polypeptide: tRNA uridine 5-carboxymethylaminomethyl modification enzyme MnmG (627 aa).

FAD contacts are provided by residues 13-18 (GGGHAG), V125, and S180. 274-288 (GPRYCPSIEDKVVRF) lines the NAD(+) pocket. Residue Q371 participates in FAD binding.

Belongs to the MnmG family. In terms of assembly, homodimer. Heterotetramer of two MnmE and two MnmG subunits. FAD serves as cofactor.

It is found in the cytoplasm. NAD-binding protein involved in the addition of a carboxymethylaminomethyl (cmnm) group at the wobble position (U34) of certain tRNAs, forming tRNA-cmnm(5)s(2)U34. The protein is tRNA uridine 5-carboxymethylaminomethyl modification enzyme MnmG of Francisella tularensis subsp. tularensis (strain FSC 198).